The following is a 287-amino-acid chain: Probable aquaporin PIP1-4 (287 aa).

The residue at position 1 (M1) is an N-acetylmethionine. Residues 1 to 36 (MEGKEEDVRVGANKFPERQPIGTSAQSTDKDYKEPP) are disordered. The Cytoplasmic portion of the chain corresponds to 1 to 55 (MEGKEEDVRVGANKFPERQPIGTSAQSTDKDYKEPPPAPLFEPGELSSWSFYRAG). Residues 56 to 76 (IAEFIATFLFLYITVLTVMGV) form a helical membrane-spanning segment. Residues 77–92 (KRAPNMCASVGIQGIA) are Extracellular-facing. The chain crosses the membrane as a helical span at residues 93–113 (WAFGGMIFALVYCTAGISGGH). At 114-133 (INPAVTFGLFLARKLSLTRA) the chain is on the cytoplasmic side. The NPA 1 motif lies at 115–117 (NPA). The chain crosses the membrane as a helical span at residues 134–154 (VFYMIMQCLGAICGAGVVKGF). Topologically, residues 155–175 (QPTPYQTLGGGANTVAHGYTK) are extracellular. Residues 176 to 196 (GSGLGAEIIGTFVLVYTVFSA) traverse the membrane as a helical segment. Residues 197–209 (TDAKRSARDSHVP) lie on the Cytoplasmic side of the membrane. A helical transmembrane segment spans residues 210-230 (ILAPLPIGFAVFLVHLATIPI). Over 231–257 (TGTGINPARSLGAAIIYNKDHSWDDHW) the chain is Extracellular. Positions 236–238 (NPA) match the NPA 2 motif. Residues 258–278 (IFWVGPFIGAALAALYHQIVI) traverse the membrane as a helical segment. Residues 279 to 287 (RAIPFKSKS) lie on the Cytoplasmic side of the membrane. Phosphoserine is present on S285.

The protein belongs to the MIP/aquaporin (TC 1.A.8) family. PIP (TC 1.A.8.11) subfamily. As to expression, predominantly expressed in roots and green siliques. Also expressed above ground and in flower buds.

The protein resides in the cell membrane. In terms of biological role, aquaporins facilitate the transport of water and small neutral solutes across cell membranes. The sequence is that of Probable aquaporin PIP1-4 (PIP1.4) from Arabidopsis thaliana (Mouse-ear cress).